The following is a 178-amino-acid chain: Large ribosomal subunit protein uL5 (178 aa).

The protein belongs to the universal ribosomal protein uL5 family. As to quaternary structure, part of the 50S ribosomal subunit; contacts the 5S rRNA and probably tRNA. Forms a bridge to the 30S subunit in the 70S ribosome.

Functionally, this is one of the proteins that bind and probably mediate the attachment of the 5S RNA into the large ribosomal subunit, where it forms part of the central protuberance. In the 70S ribosome it contacts protein S13 of the 30S subunit (bridge B1b), connecting the 2 subunits; this bridge is implicated in subunit movement. May contact the P site tRNA; the 5S rRNA and some of its associated proteins might help stabilize positioning of ribosome-bound tRNAs. The sequence is that of Large ribosomal subunit protein uL5 from Archaeoglobus fulgidus (strain ATCC 49558 / DSM 4304 / JCM 9628 / NBRC 100126 / VC-16).